The sequence spans 441 residues: Malate dehydrogenase [NADP], chloroplastic (441 aa).

The transit peptide at 1–58 directs the protein to the chloroplast; it reads MALTQLNSTCSKPQLHSSSQLSFLSRTRTRTLPRHYHSTFAPLHRTQHARISCSVAPN. Cys76 and Cys81 are joined by a disulfide. Position 105–111 (105–111) interacts with NADP(+); the sequence is GAAGMIS. Residues Arg186 and Arg192 each contribute to the substrate site. Asn199 is an NADP(+) binding site. Gln206 lines the NAD(+) pocket. 223–225 contributes to the NADP(+) binding site; sequence VGN. The substrate site is built by Asn225 and Arg256. His281 (proton acceptor) is an active-site residue. An intrachain disulfide couples Cys417 to Cys429.

Belongs to the LDH/MDH superfamily. MDH type 2 family. Homodimer.

Its subcellular location is the plastid. It localises to the chloroplast. The catalysed reaction is (S)-malate + NADP(+) = oxaloacetate + NADPH + H(+). Chloroplast NADP-MDH is activated upon illumination. In order to be enzymatically active, disulfide bridges on the protein must be reduced by thioredoxin which receives electrons from ferredoxin and the electron transport system of photosynthesis. In terms of biological role, the chloroplastic, NADP-dependent form is essential for the photosynthesis C4 cycle, which allows plants to circumvent the problem of photorespiration. In C4 plants, NADP-MDH activity acts to convert oxaloacetate to malate in chloroplasts of mesophyll cells for transport to the bundle sheath cells. The protein is Malate dehydrogenase [NADP], chloroplastic of Pisum sativum (Garden pea).